A 401-amino-acid polypeptide reads, in one-letter code: NADH-quinone oxidoreductase subunit D (401 aa).

The protein belongs to the complex I 49 kDa subunit family. As to quaternary structure, NDH-1 is composed of 14 different subunits. Subunits NuoB, C, D, E, F, and G constitute the peripheral sector of the complex.

It localises to the cell inner membrane. It catalyses the reaction a quinone + NADH + 5 H(+)(in) = a quinol + NAD(+) + 4 H(+)(out). NDH-1 shuttles electrons from NADH, via FMN and iron-sulfur (Fe-S) centers, to quinones in the respiratory chain. The immediate electron acceptor for the enzyme in this species is believed to be ubiquinone. Couples the redox reaction to proton translocation (for every two electrons transferred, four hydrogen ions are translocated across the cytoplasmic membrane), and thus conserves the redox energy in a proton gradient. This Rhodopseudomonas palustris (strain HaA2) protein is NADH-quinone oxidoreductase subunit D.